Reading from the N-terminus, the 126-residue chain is Large ribosomal subunit protein bL12 (126 aa).

It belongs to the bacterial ribosomal protein bL12 family. In terms of assembly, homodimer. Part of the ribosomal stalk of the 50S ribosomal subunit. Forms a multimeric L10(L12)X complex, where L10 forms an elongated spine to which 2 to 4 L12 dimers bind in a sequential fashion. Binds GTP-bound translation factors.

Forms part of the ribosomal stalk which helps the ribosome interact with GTP-bound translation factors. Is thus essential for accurate translation. The chain is Large ribosomal subunit protein bL12 from Bordetella petrii (strain ATCC BAA-461 / DSM 12804 / CCUG 43448).